The sequence spans 1217 residues: Disease resistance protein RPS4 (1217 aa).

Residues 14 to 175 (PQHQVFINFR…EIVKAVKTAL (162 aa)) enclose the TIR domain. 23–28 (RGADLR) is a binding site for NAD(+). Residues 33-34 (SH) are important for interaction with RRS1. E88 is a catalytic residue. In terms of domain architecture, NB-ARC spans 211 to 472 (EQRLKDLEEK…FRSQDKDYVE (262 aa)). LRR repeat units lie at residues 581-606 (MGNL…KINI), 614-636 (LKEV…DFNP), 637-659 (INLV…DKDT), 682-706 (AEKL…MKKM), 708-728 (MLAF…EMNL), 729-749 (ISLK…PLIS), 750-774 (DNIE…KLQR), 796-818 (LKAL…EIDI), 819-842 (SFLN…SVQY), 843-860 (LCLS…GISQ), and 861-887 (LSQL…NLQC). Positions 1161–1195 (TTEGVDGRVNKKKKTRMDNGRPKKKQRSGRDDNQT) are disordered. Residues 1170-1177 (NKKKKTRM) carry the Nuclear localization signal motif.

Belongs to the disease resistance TIR-NB-LRR family. Interacts with EDS1. Interacts with SRFR1. Interacts with RRS1.

The protein localises to the endomembrane system. The protein resides in the cytoplasm. It is found in the nucleus. It carries out the reaction NAD(+) + H2O = ADP-D-ribose + nicotinamide + H(+). In terms of biological role, disease resistance (R) protein that specifically recognizes the AvrRps4 type III effector avirulence protein from P.syringae. Resistance proteins guard the plant against pathogens that contain an appropriate avirulence protein via an indirect interaction with this avirulence protein. That triggers a defense system including the hypersensitive response, which restricts the pathogen growth. Probably acts as a NAD(+) hydrolase (NADase): in response to activation, catalyzes cleavage of NAD(+) into ADP-D-ribose (ADPR) and nicotinamide; NAD(+) cleavage triggering a defense system that promotes cell death. The combined presence of both regular and alternative RPS4 transcripts with truncated open reading frames (ORFs) is necessary for function. RPS4 function is regulated at multiple levels, including gene expression, alternative splicing, and protein stability. When over-expressed, confers temperature-conditioned EDS1-dependent auto-immunity. Heterodimerization with RRS1 is required to form a functional complex to recognize AvrRps4 and PopP2. Abscisic acid deficiency enhances nuclear accumulation of RPS4 and its cell death-inducing activity. This Arabidopsis thaliana (Mouse-ear cress) protein is Disease resistance protein RPS4.